The following is a 357-amino-acid chain: Ribosomal RNA large subunit methyltransferase M (357 aa).

S-adenosyl-L-methionine contacts are provided by residues serine 183, alanine 216–glycine 219, aspartate 235, aspartate 255, and aspartate 271. Lysine 300 (proton acceptor) is an active-site residue.

This sequence belongs to the class I-like SAM-binding methyltransferase superfamily. RNA methyltransferase RlmE family. RlmM subfamily. Monomer.

It localises to the cytoplasm. The enzyme catalyses cytidine(2498) in 23S rRNA + S-adenosyl-L-methionine = 2'-O-methylcytidine(2498) in 23S rRNA + S-adenosyl-L-homocysteine + H(+). Catalyzes the 2'-O-methylation at nucleotide C2498 in 23S rRNA. The chain is Ribosomal RNA large subunit methyltransferase M from Pseudomonas fluorescens (strain Pf0-1).